The chain runs to 536 residues: Probable tyrosyl-DNA phosphodiesterase (536 aa).

H122 acts as the Nucleophile in catalysis. Substrate is bound at residue K124. The segment at 315–318 is interaction with DNA; that stretch reads SMGS. Residue H401 is the Proton donor/acceptor of the active site. K403 contacts substrate.

This sequence belongs to the tyrosyl-DNA phosphodiesterase family.

It is found in the nucleus. Functionally, DNA repair enzyme that can remove a variety of covalent adducts from DNA through hydrolysis of a 3'-phosphodiester bond, giving rise to DNA with a free 3' phosphate. Catalyzes the hydrolysis of dead-end complexes between DNA and the topoisomerase I active site tyrosine residue. Hydrolyzes 3'-phosphoglycolates on protruding 3' ends on DNA double-strand breaks due to DNA damage by radiation and free radicals. Acts on blunt-ended double-strand DNA breaks and on single-stranded DNA. May have low 3'exonuclease activity and may be able to remove a single nucleoside from the 3'end of DNA and RNA molecules with 3'hydroxyl groups. Has no exonuclease activity towards DNA or RNA with a 3'phosphate. The protein is Probable tyrosyl-DNA phosphodiesterase of Schizosaccharomyces pombe (strain 972 / ATCC 24843) (Fission yeast).